Reading from the N-terminus, the 316-residue chain is Formimidoylglutamase (316 aa).

The Mn(2+) site is built by H127, D156, H158, D160, D247, and D249.

It belongs to the arginase family. Requires Mn(2+) as cofactor.

The enzyme catalyses N-formimidoyl-L-glutamate + H2O = formamide + L-glutamate. It functions in the pathway amino-acid degradation; L-histidine degradation into L-glutamate; L-glutamate from N-formimidoyl-L-glutamate (hydrolase route): step 1/1. Its function is as follows. Catalyzes the conversion of N-formimidoyl-L-glutamate to L-glutamate and formamide. The protein is Formimidoylglutamase of Cupriavidus pinatubonensis (strain JMP 134 / LMG 1197) (Cupriavidus necator (strain JMP 134)).